The primary structure comprises 162 residues: Ribosomal RNA large subunit methyltransferase H (162 aa).

Residues leucine 78 and glycine 110 each contribute to the S-adenosyl-L-methionine site.

It belongs to the RNA methyltransferase RlmH family. As to quaternary structure, homodimer.

The protein localises to the cytoplasm. It carries out the reaction pseudouridine(1915) in 23S rRNA + S-adenosyl-L-methionine = N(3)-methylpseudouridine(1915) in 23S rRNA + S-adenosyl-L-homocysteine + H(+). Specifically methylates the pseudouridine at position 1915 (m3Psi1915) in 23S rRNA. The polypeptide is Ribosomal RNA large subunit methyltransferase H (Bradyrhizobium sp. (strain ORS 278)).